A 185-amino-acid polypeptide reads, in one-letter code: Adenylyl-sulfate kinase (185 aa).

13–20 (GLSGAGKS) is an ATP binding site. Serine 86 (phosphoserine intermediate) is an active-site residue.

The protein belongs to the APS kinase family.

The catalysed reaction is adenosine 5'-phosphosulfate + ATP = 3'-phosphoadenylyl sulfate + ADP + H(+). Its pathway is sulfur metabolism; hydrogen sulfide biosynthesis; sulfite from sulfate: step 2/3. Its function is as follows. Catalyzes the synthesis of activated sulfate. This chain is Adenylyl-sulfate kinase, found in Myxococcus xanthus (strain DK1622).